Here is an 856-residue protein sequence, read N- to C-terminus: V-type proton ATPase 116 kDa subunit a 2 (856 aa).

Topologically, residues Met-1–Glu-393 are cytoplasmic. Residues Val-394–Phe-412 traverse the membrane as a helical segment. Residues Gly-413 to Asp-414 are Vacuolar-facing. Residues Phe-415–Asn-431 form a helical membrane-spanning segment. Residues Glu-432–Arg-445 lie on the Cytoplasmic side of the membrane. A helical transmembrane segment spans residues Met-446–Ser-475. The Vacuolar portion of the chain corresponds to Val-476–Ser-549. The chain crosses the membrane as a helical span at residues Phe-550 to Leu-569. Residues Gly-570–Ser-587 are Cytoplasmic-facing. The helical transmembrane segment at Val-588 to Lys-608 threads the bilayer. The Vacuolar segment spans residues Trp-609–Val-651. Residues Leu-652–Leu-671 traverse the membrane as a helical segment. At Leu-672–Ser-739 the chain is on the cytoplasmic side. Ser-695 and Ser-700 each carry phosphoserine. A helical transmembrane segment spans residues Ile-740–Ala-764. Topologically, residues Gln-765–Tyr-785 are vacuolar. The helical transmembrane segment at Gly-786 to Glu-824 threads the bilayer. The Cytoplasmic segment spans residues Phe-825–Ala-856.

The protein belongs to the V-ATPase 116 kDa subunit family. In terms of assembly, V-ATPase is a heteromultimeric enzyme made up of two complexes: the ATP-hydrolytic V1 complex and the proton translocation V0 complex. The V1 complex consists of three catalytic AB heterodimers that form a heterohexamer, three peripheral stalks each consisting of EG heterodimers, one central rotor including subunits D and F, and the regulatory subunits C and H. The proton translocation complex V0 consists of the proton transport subunit a, a ring of proteolipid subunits c9c'', rotary subunit d, subunits e and f, and the accessory subunits ATP6AP1/Ac45 and ATP6AP2/PRR. Directly interacts with PSCD2 through its N-terminal cytosolic tail in an intra-endosomal acidification-dependent manner. Disruption of this interaction results in the inhibition of endocytosis. Interacts with SPAAR. As to expression, relatively high expression in kidney and liver. Lower levels in the spleen, testis, and skeletal muscle. Also expressed in the thymus.

It is found in the cell membrane. Its subcellular location is the endosome membrane. Its function is as follows. Subunit of the V0 complex of vacuolar(H+)-ATPase (V-ATPase), a multisubunit enzyme composed of a peripheral complex (V1) that hydrolyzes ATP and a membrane integral complex (V0) that translocates protons. V-ATPase is responsible for acidifying and maintaining the pH of intracellular compartments and in some cell types, is targeted to the plasma membrane, where it is responsible for acidifying the extracellular environment. Essential component of the endosomal pH-sensing machinery. May play a role in maintaining the Golgi functions, such as glycosylation maturation, by controlling the Golgi pH. In aerobic conditions, involved in intracellular iron homeostasis, thus triggering the activity of Fe(2+) prolyl hydroxylase (PHD) enzymes, and leading to HIF1A hydroxylation and subsequent proteasomal degradation. In Mus musculus (Mouse), this protein is V-type proton ATPase 116 kDa subunit a 2 (Atp6v0a2).